The primary structure comprises 171 residues: Adenine phosphoribosyltransferase (171 aa).

Belongs to the purine/pyrimidine phosphoribosyltransferase family. As to quaternary structure, homodimer.

The protein localises to the cytoplasm. It catalyses the reaction AMP + diphosphate = 5-phospho-alpha-D-ribose 1-diphosphate + adenine. Its pathway is purine metabolism; AMP biosynthesis via salvage pathway; AMP from adenine: step 1/1. Its function is as follows. Catalyzes a salvage reaction resulting in the formation of AMP, that is energically less costly than de novo synthesis. The chain is Adenine phosphoribosyltransferase from Natranaerobius thermophilus (strain ATCC BAA-1301 / DSM 18059 / JW/NM-WN-LF).